Reading from the N-terminus, the 444-residue chain is MIEDNKENKDHSSERGRVTLIFSLKNEVGGLIKALKIFQENHVNLLHIESRKSKRRNSEFEIFVDCDINREQLNDIFPLLKSHTTVLSVDSPDQLPEKEDVMETVPWFPKKISDLDFCANRVLLYGSELDADHPGFKDNVYRRRRKYFAELAMNYKHGDPIPKIEFTEEEIKTWGTIFRELNKLYPTHACREYLRNLPLLSKYCGYREDNVPQLEDVSNFLKERTGFSIRPVAGYLSPRDFLSGLAFRVFHCTQYVRHSSDPLYTPEPDTCHELLGHVPLLAEPSFAQFSQEIGLASLGASEETVQKLATCYFFTVEFGLCKQDGQLRVFGAGLLSSISELRHALSGHAKVKPFDPKVACKQECLITSFQDVYFVSESFEDAKEKMREFAKTVKRPFGVKYNPYTQSIQVLRDSKSITSAMNELRHDLDVVNDALARVSRWPSV.

Residues 19 to 94 (TLIFSLKNEV…TVLSVDSPDQ (76 aa)) form the ACT domain. The residue at position 58 (serine 58) is a Phosphoserine; by PKA. L-tryptophan-binding residues include tyrosine 235, arginine 257, and threonine 265. Positions 272, 277, and 317 each coordinate Fe cation. L-tryptophan contacts are provided by serine 336 and isoleucine 366.

Belongs to the biopterin-dependent aromatic amino acid hydroxylase family. In terms of assembly, homotetramer. Interacts with DNAJC12. It depends on Fe(2+) as a cofactor. Post-translationally, ubiquitinated, leading to its degradation by the proteasome. Ubiquitinated is triggered by phosphorylation. In terms of processing, phosphorylated; triggering degradation by the proteasome.

It catalyses the reaction (6R)-L-erythro-5,6,7,8-tetrahydrobiopterin + L-tryptophan + O2 = 5-hydroxy-L-tryptophan + (4aS,6R)-4a-hydroxy-L-erythro-5,6,7,8-tetrahydrobiopterin. Its pathway is aromatic compound metabolism; serotonin biosynthesis; serotonin from L-tryptophan: step 1/2. Functionally, oxidizes L-tryptophan to 5-hydroxy-l-tryptophan in the rate-determining step of serotonin biosynthesis. This Rattus norvegicus (Rat) protein is Tryptophan 5-hydroxylase 1 (Tph1).